The following is a 346-amino-acid chain: MAIKTKTSLIPSCSSPEDLKRVLQTLGSSWGDVVEDLERLEVVPLKGAMTNEVYQINWPTLNGEDVHRKVLVRIYGDGVDLFFNRGDEIKTFECMSHHGYGPKLLGRFSDGRLEEFIHARTLSADDLRVAETSDFIAAKLREFHKLDMPGPKNVLLWERLRTWLKEAKNLASPIEMDKYRLEGLENEINLLEERLTRDDQEIGFCHNDLQYGNVMIDEVTNAITIIDYEYSSFNPIAYDIANHFCEMAANYHSDTPHVLDYTLYPGEGERRRFISTYLGSTGNATSDKEVERLLKDAESYTLANHIFWGLWGIISGHVNKIEFDYMEYARQRFEQYWLRKPLLLEG.

The ATP site is built by Arg-73, Gln-210, and Asp-227.

The protein belongs to the choline/ethanolamine kinase family. In terms of tissue distribution, expressed in roots. Expressed at low levels in cauline leaves and flowers.

It carries out the reaction choline + ATP = phosphocholine + ADP + H(+). It participates in phospholipid metabolism; phosphatidylcholine biosynthesis; phosphocholine from choline: step 1/1. In terms of biological role, involved in phospholipid biosynthesis. Catalyzes the first step in phosphatidylcholine biosynthesis. The polypeptide is Probable choline kinase 1 (CK1) (Arabidopsis thaliana (Mouse-ear cress)).